The chain runs to 281 residues: 2-dehydro-3-deoxyphosphooctonate aldolase (281 aa).

It belongs to the KdsA family.

Its subcellular location is the cytoplasm. It catalyses the reaction D-arabinose 5-phosphate + phosphoenolpyruvate + H2O = 3-deoxy-alpha-D-manno-2-octulosonate-8-phosphate + phosphate. The protein operates within carbohydrate biosynthesis; 3-deoxy-D-manno-octulosonate biosynthesis; 3-deoxy-D-manno-octulosonate from D-ribulose 5-phosphate: step 2/3. It functions in the pathway bacterial outer membrane biogenesis; lipopolysaccharide biosynthesis. The chain is 2-dehydro-3-deoxyphosphooctonate aldolase from Pseudomonas savastanoi pv. phaseolicola (strain 1448A / Race 6) (Pseudomonas syringae pv. phaseolicola (strain 1448A / Race 6)).